The chain runs to 83 residues: Exodeoxyribonuclease 7 small subunit (83 aa).

It belongs to the XseB family. Heterooligomer composed of large and small subunits.

The protein resides in the cytoplasm. The enzyme catalyses Exonucleolytic cleavage in either 5'- to 3'- or 3'- to 5'-direction to yield nucleoside 5'-phosphates.. Bidirectionally degrades single-stranded DNA into large acid-insoluble oligonucleotides, which are then degraded further into small acid-soluble oligonucleotides. This is Exodeoxyribonuclease 7 small subunit from Heliobacterium modesticaldum (strain ATCC 51547 / Ice1).